Reading from the N-terminus, the 450-residue chain is MLSNPVVISIIVLLALSLLRINVIIALVIAALTAGFIGDLGLTKTIETFTGGLGGGAEVAMNYAILGAFAIAISKSGITDLIAYKIITKMNKTPTAGNLTWFKYFIFAVLALFAISSQNLLPVHIAFIPIVVPPLLSIFNRLKIDRRAVACVLTFGLTATYILLPVGFGKIFIESILVKNINQAGATLGLQTNVAQVSLAMLLPVIGMILGLLTAIFITYRKPREYNINVEEATTKDIEAHIANIKPKQIVASLIAIVATFATQLVTSSTIIGGLIGLIIFVLCGIFKLKESNDIFQQGLRLMAMIGFVMIAASGFANVINATTGVTDLVQSLSSGVVQSKGIAALLMLVVGLLITMGIGSSFSTVPIITSIYVPLCLSFGFSPLATISIVGVAAALGDAGSPASDSTLGPTSGLNMDGKHDHIWDSVVPTFIHYNIPLLVFGWIAAMYL.

A run of 12 helical transmembrane segments spans residues 10–30 (IIVLLALSLLRINVIIALVIA), 53–73 (LGGGAEVAMNYAILGAFAIAI), 95–115 (TAGNLTWFKYFIFAVLALFAI), 120–140 (LLPVHIAFIPIVVPPLLSIFN), 148–168 (AVACVLTFGLTATYILLPVGF), 199–219 (LAMLLPVIGMILGLLTAIFIT), 242–262 (IANIKPKQIVASLIAIVATFA), 267–287 (TSSTIIGGLIGLIIFVLCGIF), 302–322 (LMAMIGFVMIAASGFANVINA), 343–363 (IAALLMLVVGLLITMGIGSSF), 378–398 (LSFGFSPLATISIVGVAAALG), and 428–448 (VVPTFIHYNIPLLVFGWIAAM).

Its subcellular location is the cell membrane. This is an uncharacterized protein from Haemophilus influenzae (strain ATCC 51907 / DSM 11121 / KW20 / Rd).